A 160-amino-acid chain; its full sequence is Crossover junction endodeoxyribonuclease RuvC (160 aa).

Catalysis depends on residues D7, E70, and D142. Residues D7, E70, and D142 each contribute to the Mg(2+) site.

This sequence belongs to the RuvC family. In terms of assembly, homodimer which binds Holliday junction (HJ) DNA. The HJ becomes 2-fold symmetrical on binding to RuvC with unstacked arms; it has a different conformation from HJ DNA in complex with RuvA. In the full resolvosome a probable DNA-RuvA(4)-RuvB(12)-RuvC(2) complex forms which resolves the HJ. Requires Mg(2+) as cofactor.

The protein localises to the cytoplasm. The enzyme catalyses Endonucleolytic cleavage at a junction such as a reciprocal single-stranded crossover between two homologous DNA duplexes (Holliday junction).. Functionally, the RuvA-RuvB-RuvC complex processes Holliday junction (HJ) DNA during genetic recombination and DNA repair. Endonuclease that resolves HJ intermediates. Cleaves cruciform DNA by making single-stranded nicks across the HJ at symmetrical positions within the homologous arms, yielding a 5'-phosphate and a 3'-hydroxyl group; requires a central core of homology in the junction. The consensus cleavage sequence is 5'-(A/T)TT(C/G)-3'. Cleavage occurs on the 3'-side of the TT dinucleotide at the point of strand exchange. HJ branch migration catalyzed by RuvA-RuvB allows RuvC to scan DNA until it finds its consensus sequence, where it cleaves and resolves the cruciform DNA. The sequence is that of Crossover junction endodeoxyribonuclease RuvC from Ehrlichia ruminantium (strain Welgevonden).